The following is a 382-amino-acid chain: uncharacterized protein (382 aa).

12 consecutive transmembrane segments (helical) span residues 14 to 34 (GLLL…LWLA), 45 to 65 (VVSS…GYVI), 79 to 99 (FIFA…SWLA), 102 to 122 (FVAG…LMCS), 131 to 151 (LLAA…LLVS), 157 to 177 (LMSV…PLLF), 204 to 224 (LGVN…GLMP), 235 to 255 (ASIG…QWPI), 270 to 290 (VQVF…AMAP), 291 to 311 (ALFI…AWAC), 325 to 345 (ALLL…AMLM), and 348 to 368 (FSDN…LLML).

It belongs to the major facilitator superfamily. YcaD (TC 2.A.1.26) family.

Its subcellular location is the cell inner membrane. This is an uncharacterized protein from Escherichia coli O45:K1 (strain S88 / ExPEC).